The chain runs to 421 residues: Probable G-protein coupled receptor 151 (421 aa).

Residues 1-44 are Extracellular-facing; the sequence is MGKATLAVFADSDSSNMNESFAHLHFAGGYLPSDSKGWRTIIPS. An N-linked (GlcNAc...) asparagine glycan is attached at Asn18. A helical membrane pass occupies residues 45 to 65; that stretch reads LLAAVCLVGFVGNLCVIGLLL. The Cytoplasmic segment spans residues 66–74; the sequence is HGVWKRKPS. A helical transmembrane segment spans residues 75 to 95; it reads MIHSLILNLSLADISLLLFSA. Residues 96–122 are Extracellular-facing; the sequence is PVRATAYVKGVWDLGWFVCKSSDWFTH. Cys114 and Cys190 form a disulfide bridge. A helical membrane pass occupies residues 123–143; the sequence is MCMAAKSLTFVVVAKVCFMYA. Topologically, residues 144 to 156 are cytoplasmic; it reads SDPAKPVGTHNCT. Residues 157–177 form a helical membrane-spanning segment; it reads IWSLLGAIWVVASLLPLPEWF. Topologically, residues 178–204 are extracellular; sequence FSTTRHHAGVEMCLVDVPAVAAEFMSL. The helical transmembrane segment at 205 to 225 threads the bilayer; that stretch reads FGKLYPLLVFCLPLLLAGFYF. The Cytoplasmic segment spans residues 226–258; that stretch reads WRAYNQCKIRCAKTQNLRNQMRSKQLTVMLLST. A helical transmembrane segment spans residues 259-279; that stretch reads AVTSALLWLPEWIAWLWVWHL. The Extracellular portion of the chain corresponds to 280–289; sequence KAGGPMPPQG. The chain crosses the membrane as a helical span at residues 290 to 310; it reads FIALSQVLMFSISTVNPLIFL. Residues 311–421 lie on the Cytoplasmic side of the membrane; that stretch reads MMSEEFKAGL…HEGQETKGCN (111 aa). Disordered stretches follow at residues 346–381 and 394–421; these read IETLPGKAPSPETQTCIPDTDRCGSPDSSKETTDKV and HERDVGPSAQDNDPIPWEHEGQETKGCN. Composition is skewed to basic and acidic residues over residues 364-379 and 409-421; these read DTDRCGSPDSSKETTD and PWEHEGQETKGCN.

It belongs to the G-protein coupled receptor 1 family. Exclusively expressed in neurons of the habenular complex. The expression is particularly prominent in the medial habenular nucleus, whereas the lateral habenular nucleus exhibited a lower level of expression.

The protein localises to the cell membrane. Its function is as follows. Orphan receptor. The protein is Probable G-protein coupled receptor 151 (Gpr151) of Rattus norvegicus (Rat).